A 165-amino-acid polypeptide reads, in one-letter code: Nucleotide-binding protein P9301_05061 (165 aa).

Belongs to the YajQ family.

Its function is as follows. Nucleotide-binding protein. This is Nucleotide-binding protein P9301_05061 from Prochlorococcus marinus (strain MIT 9301).